A 44-amino-acid chain; its full sequence is Cytochrome b559 subunit beta (44 aa).

A helical transmembrane segment spans residues 19–35; it reads WLSIHALAVPTIFFLGS. Heme is bound at residue H23.

Belongs to the PsbE/PsbF family. Heterodimer of an alpha subunit and a beta subunit. PSII is composed of 1 copy each of membrane proteins PsbA, PsbB, PsbC, PsbD, PsbE, PsbF, PsbH, PsbI, PsbJ, PsbK, PsbL, PsbM, PsbT, PsbX, PsbY, PsbZ, Psb30/Ycf12, at least 3 peripheral proteins of the oxygen-evolving complex and a large number of cofactors. It forms dimeric complexes. It depends on heme b as a cofactor.

It localises to the plastid. It is found in the chloroplast thylakoid membrane. This b-type cytochrome is tightly associated with the reaction center of photosystem II (PSII). PSII is a light-driven water:plastoquinone oxidoreductase that uses light energy to abstract electrons from H(2)O, generating O(2) and a proton gradient subsequently used for ATP formation. It consists of a core antenna complex that captures photons, and an electron transfer chain that converts photonic excitation into a charge separation. This chain is Cytochrome b559 subunit beta, found in Tetradesmus obliquus (Green alga).